Reading from the N-terminus, the 237-residue chain is Phosphoribosylaminoimidazole-succinocarboxamide synthase (237 aa).

This sequence belongs to the SAICAR synthetase family.

It catalyses the reaction 5-amino-1-(5-phospho-D-ribosyl)imidazole-4-carboxylate + L-aspartate + ATP = (2S)-2-[5-amino-1-(5-phospho-beta-D-ribosyl)imidazole-4-carboxamido]succinate + ADP + phosphate + 2 H(+). It functions in the pathway purine metabolism; IMP biosynthesis via de novo pathway; 5-amino-1-(5-phospho-D-ribosyl)imidazole-4-carboxamide from 5-amino-1-(5-phospho-D-ribosyl)imidazole-4-carboxylate: step 1/2. The protein is Phosphoribosylaminoimidazole-succinocarboxamide synthase of Methanosarcina acetivorans (strain ATCC 35395 / DSM 2834 / JCM 12185 / C2A).